Reading from the N-terminus, the 315-residue chain is 4-hydroxy-3-methylbut-2-enyl diphosphate reductase (315 aa).

C18 contributes to the [4Fe-4S] cluster binding site. The (2E)-4-hydroxy-3-methylbut-2-enyl diphosphate site is built by H47 and H80. Dimethylallyl diphosphate-binding residues include H47 and H80. Positions 47 and 80 each coordinate isopentenyl diphosphate. [4Fe-4S] cluster is bound at residue C102. H130 contacts (2E)-4-hydroxy-3-methylbut-2-enyl diphosphate. H130 is a dimethylallyl diphosphate binding site. An isopentenyl diphosphate-binding site is contributed by H130. E132 (proton donor) is an active-site residue. Position 171 (T171) interacts with (2E)-4-hydroxy-3-methylbut-2-enyl diphosphate. Position 201 (C201) interacts with [4Fe-4S] cluster. Residues S229, S230, N231, and S274 each contribute to the (2E)-4-hydroxy-3-methylbut-2-enyl diphosphate site. Dimethylallyl diphosphate is bound by residues S229, S230, N231, and S274. Residues S229, S230, N231, and S274 each coordinate isopentenyl diphosphate.

This sequence belongs to the IspH family. [4Fe-4S] cluster serves as cofactor.

It carries out the reaction isopentenyl diphosphate + 2 oxidized [2Fe-2S]-[ferredoxin] + H2O = (2E)-4-hydroxy-3-methylbut-2-enyl diphosphate + 2 reduced [2Fe-2S]-[ferredoxin] + 2 H(+). The enzyme catalyses dimethylallyl diphosphate + 2 oxidized [2Fe-2S]-[ferredoxin] + H2O = (2E)-4-hydroxy-3-methylbut-2-enyl diphosphate + 2 reduced [2Fe-2S]-[ferredoxin] + 2 H(+). Its pathway is isoprenoid biosynthesis; dimethylallyl diphosphate biosynthesis; dimethylallyl diphosphate from (2E)-4-hydroxy-3-methylbutenyl diphosphate: step 1/1. It functions in the pathway isoprenoid biosynthesis; isopentenyl diphosphate biosynthesis via DXP pathway; isopentenyl diphosphate from 1-deoxy-D-xylulose 5-phosphate: step 6/6. Functionally, catalyzes the conversion of 1-hydroxy-2-methyl-2-(E)-butenyl 4-diphosphate (HMBPP) into a mixture of isopentenyl diphosphate (IPP) and dimethylallyl diphosphate (DMAPP). Acts in the terminal step of the DOXP/MEP pathway for isoprenoid precursor biosynthesis. This is 4-hydroxy-3-methylbut-2-enyl diphosphate reductase from Hyphomonas neptunium (strain ATCC 15444).